We begin with the raw amino-acid sequence, 1018 residues long: Transmembrane protein 132A (1018 aa).

The N-terminal stretch at methionine 1 to serine 32 is a signal peptide. Topologically, residues asparagine 33 to alanine 846 are extracellular. An N-linked (GlcNAc...) asparagine glycan is attached at asparagine 276. The tract at residues isoleucine 606–proline 911 is binds to HSPA5/GRP78. A confers cellular localization similar to full-length form region spans residues leucine 666–serine 1018. Basic and acidic residues predominate over residues glutamate 807–asparagine 818. A disordered region spans residues glutamate 807–alanine 833. Residues glutamate 819 to methionine 830 are compositionally biased toward acidic residues. A helical transmembrane segment spans residues leucine 847–leucine 867. At arginine 868 to serine 1018 the chain is on the cytoplasmic side. Residues serine 900 to lysine 956 are disordered. Composition is skewed to low complexity over residues cysteine 906–serine 922 and alanine 932–serine 944.

It belongs to the TMEM132 family. Interacts with HSPA5/GRP78.

Its subcellular location is the golgi apparatus membrane. The protein resides in the endoplasmic reticulum membrane. Functionally, may play a role in embryonic and postnatal development of the brain. Increased resistance to cell death induced by serum starvation in cultured cells. Regulates cAMP-induced GFAP gene expression via STAT3 phosphorylation. In Mus musculus (Mouse), this protein is Transmembrane protein 132A (Tmem132a).